Consider the following 90-residue polypeptide: MIKTKEVTFVTILIVLCVFISTIHAKRYIEYPIRLDLGKGCDPRFPTAACYKRTPANPYRRPCTTANRCRRSTSSTRVPSLKTFVEIPPM.

The N-terminal stretch at 1 to 25 (MIKTKEVTFVTILIVLCVFISTIHA) is a signal peptide. 2 disulfide bridges follow: Cys-41-Cys-50 and Cys-63-Cys-69.

This sequence belongs to the plant rapid alkalinization factor (RALF) family.

The protein resides in the secreted. Its function is as follows. Cell signaling peptide that may regulate plant stress, growth, and development. Mediates a rapid alkalinization of extracellular space by mediating a transient increase in the cytoplasmic Ca(2+) concentration leading to a calcium-dependent signaling events through a cell surface receptor and a concomitant activation of some intracellular mitogen-activated protein kinases. This Arabidopsis thaliana (Mouse-ear cress) protein is Protein RALF-like 29 (RALFL29).